We begin with the raw amino-acid sequence, 473 residues long: MWGFAGGRLFGIFSAPVLVAVVCCAQSVNDPGNMSFVKETVDKLLKGYDIRLRPDFGGPPVCVGMNIDIASIDMVSEVNMDYTLTMYFQQYWRDKRLAYSGIPLNLTLDNRVADQLWVPDTYFLNDKKSFVHGVTVKNRMIRLHPDGTVLYGLRITTTAACMMDLRRYPLDEQNCTLEIESYGYTTDDIEFYWRGGDKAVTGVERIELPQFSIVEHRLVSRNVVFATGAYPRLSLSFRLKRNIGYFILQTYMPSILITILSWVSFWINYDASAARVALGITTVLTMTTINTHLRETLPKIPYVKAIDMYLMGCFVFVFLALLEYAFVNYIFFGRGPQRQKKLAEKTAKAKNDRSKSEINRVDAHGNILLAPMDVHNEMNEVAGSVGDTRNSAISFDNSGIQYRKQSMPKEGHGRYMGDRSIPHKKTHLRRRSSQLKIKIPDLTDVNAIDRWSRIVFPFTFSLFNLVYWLYYVN.

Positions 1–25 (MWGFAGGRLFGIFSAPVLVAVVCCA) are cleaved as a signal peptide. At 26-246 (QSVNDPGNMS…FRLKRNIGYF (221 aa)) the chain is on the extracellular side. N-linked (GlcNAc...) asparagine glycosylation is found at Asn-33 and Asn-105. Tyr-122 contributes to the histamine binding site. A disulfide bridge connects residues Cys-161 and Cys-175. The N-linked (GlcNAc...) asparagine glycan is linked to Asn-174. Residues Glu-180, Tyr-182, and Thr-227 each contribute to the 4-aminobutanoate site. Histamine-binding positions include 181–182 (SY) and Thr-227. A helical transmembrane segment spans residues 247-267 (ILQTYMPSILITILSWVSFWI). Residues 268 to 271 (NYDA) are Cytoplasmic-facing. Residues 272-292 (SAARVALGITTVLTMTTINTH) traverse the membrane as a helical segment. Residues 293 to 304 (LRETLPKIPYVK) lie on the Extracellular side of the membrane. A helical transmembrane segment spans residues 305–328 (AIDMYLMGCFVFVFLALLEYAFVN). Residues 329–447 (YIFFGRGPQR…KIPDLTDVNA (119 aa)) lie on the Cytoplasmic side of the membrane. Residues 448-470 (IDRWSRIVFPFTFSLFNLVYWLY) traverse the membrane as a helical segment. The Extracellular segment spans residues 471 to 473 (YVN).

Belongs to the ligand-gated ion channel (TC 1.A.9) family. Gamma-aminobutyric acid receptor (TC 1.A.9.5) subfamily. GABRB3 sub-subfamily. In terms of assembly, heteropentamer, formed by a combination of alpha (GABRA1-6), beta (GABRB1-3), gamma (GABRG1-3), delta (GABRD), epsilon (GABRE), rho (GABRR1-3), pi (GABRP) and theta (GABRQ) chains, each subunit exhibiting distinct physiological and pharmacological properties. Can form functional homopentamers (in vitro). Interacts with UBQLN1. May interact with KIF21B. Identified in a complex of 720 kDa composed of LHFPL4, NLGN2, GABRA1, GABRB2, GABRG2 and GABRB3. Interacts with LHFPL4. Interacts with GIT1; this interaction is required for synaptic GABRB3 surface stability and inhibitory synapse strength.

The protein localises to the postsynaptic cell membrane. Its subcellular location is the cell membrane. The protein resides in the cytoplasmic vesicle membrane. The catalysed reaction is chloride(in) = chloride(out). Its activity is regulated as follows. Potentiated by histamine. Functionally, beta subunit of the heteropentameric ligand-gated chloride channel gated by gamma-aminobutyric acid (GABA), a major inhibitory neurotransmitter in the brain. GABA-gated chloride channels, also named GABA(A) receptors (GABAAR), consist of five subunits arranged around a central pore and contain GABA active binding site(s) located at the alpha and beta subunit interface(s). GABAARs containing beta-3/GABRB3 subunit are found at both synaptic and extrasynaptic sites. When activated by GABA, GABAARs selectively allow the flow of chloride anions across the cell membrane down their electrochemical gradient. Chloride influx into the postsynaptic neuron following GABAAR opening decreases the neuron ability to generate a new action potential, thereby reducing nerve transmission. GABAARs containing alpha-1 and beta-3 subunits exhibit synaptogenic activity; the gamma-2 subunit being necessary but not sufficient to induce rapid synaptic contacts formation. Extrasynaptic beta-3 receptors contribute to the tonic GABAergic inhibition. GABAARs containing alpha-1, beta-3 and epsilon subunits may permit spontaneous chloride channel activity while preserving the structural information required for GABA-gated openings. Beta-containing GABAARs can simultaneously bind GABA and histamine where histamine binds at the interface of two neighboring beta subunits, which may be involved in the regulation of sleep and wakefulness. Plays an important role in somatosensation and in the production of antinociception. This is Gamma-aminobutyric acid receptor subunit beta-3 from Mus musculus (Mouse).